The chain runs to 128 residues: Putative lipid-binding protein At4g00165 (128 aa).

The signal sequence occupies residues 1–23 (MGISKALRSLLILLLLNITFFFG). 4 cysteine pairs are disulfide-bonded: C34/C90, C46/C76, C56/C75, and C92/C128.

The protein belongs to the plant LTP family. PEARLI1 subfamily.

The protein resides in the secreted. This chain is Putative lipid-binding protein At4g00165, found in Arabidopsis thaliana (Mouse-ear cress).